We begin with the raw amino-acid sequence, 824 residues long: Leucine--tRNA ligase (824 aa).

The short motif at 41–51 is the 'HIGH' region element; it reads PYPSGTLHVGH. A 'KMSKS' region motif is present at residues 580 to 584; it reads KMSKS. K583 contacts ATP.

Belongs to the class-I aminoacyl-tRNA synthetase family.

The protein localises to the cytoplasm. It carries out the reaction tRNA(Leu) + L-leucine + ATP = L-leucyl-tRNA(Leu) + AMP + diphosphate. The sequence is that of Leucine--tRNA ligase from Thermotoga maritima (strain ATCC 43589 / DSM 3109 / JCM 10099 / NBRC 100826 / MSB8).